We begin with the raw amino-acid sequence, 174 residues long: Endoribonuclease YbeY (174 aa).

Zn(2+)-binding residues include His-129, His-133, and His-139.

This sequence belongs to the endoribonuclease YbeY family. Requires Zn(2+) as cofactor.

The protein localises to the cytoplasm. Single strand-specific metallo-endoribonuclease involved in late-stage 70S ribosome quality control and in maturation of the 3' terminus of the 16S rRNA. In Lactobacillus delbrueckii subsp. bulgaricus (strain ATCC BAA-365 / Lb-18), this protein is Endoribonuclease YbeY.